We begin with the raw amino-acid sequence, 1066 residues long: Probable sucrose-phosphate synthase 4 (1066 aa).

Disordered regions lie at residues Tyr132 to Pro166 and Pro688 to Asp714. Residues Glu143–Arg162 show a composition bias toward basic and acidic residues.

Belongs to the glycosyltransferase 1 family. In terms of assembly, homodimer or homotetramer. In terms of tissue distribution, expressed in germinating seeds.

The catalysed reaction is beta-D-fructose 6-phosphate + UDP-alpha-D-glucose = sucrose 6(F)-phosphate + UDP + H(+). It participates in glycan biosynthesis; sucrose biosynthesis; sucrose from D-fructose 6-phosphate and UDP-alpha-D-glucose: step 1/2. Its activity is regulated as follows. Activity is regulated by phosphorylation and moderated by concentration of metabolites and light. Its function is as follows. Plays a role in photosynthetic sucrose synthesis by catalyzing the rate-limiting step of sucrose biosynthesis from UDP-glucose and fructose- 6-phosphate. Involved in the regulation of carbon partitioning in the leaves of plants. May regulate the synthesis of sucrose and therefore play a major role as a limiting factor in the export of photoassimilates out of the leaf. Plays a role for sucrose availability that is essential for plant growth and fiber elongation. The protein is Probable sucrose-phosphate synthase 4 (SPS4) of Oryza sativa subsp. japonica (Rice).